The following is a 151-amino-acid chain: Linear element protein Mug20 (151 aa).

Residues 56-140 (EEKLRALDKL…CAMEKLKMIE (85 aa)) are a coiled coil.

As to quaternary structure, component of linear elements (LinEs), which are similar to synaptonemal complexes, at least composed of rec27, rec25, rec10 and mug20. Interacts with rec10.

It is found in the cytoplasm. It localises to the nucleus. Its subcellular location is the chromosome. Its function is as follows. During meiotic DNA recombination, binds to and may help activate DNA double-strand break (DSB) hotspot sites. The chain is Linear element protein Mug20 from Schizosaccharomyces pombe (strain 972 / ATCC 24843) (Fission yeast).